The sequence spans 393 residues: Flap endonuclease 1 (393 aa).

The tract at residues 1–108 is N-domain; the sequence is MGILGLSKLL…SELQERRQRA (108 aa). A Mg(2+)-binding site is contributed by D34. R74 serves as a coordination point for DNA. The Mg(2+) site is built by D90, E162, E164, D183, and D185. The I-domain stretch occupies residues 126 to 257; it reads LMEKMSKRTV…QKAWEGIKKH (132 aa). E162 lines the DNA pocket. G235 and D237 together coordinate DNA. Residue D237 coordinates Mg(2+). Residues 340-348 are interaction with PCNA; the sequence is TQGRLDQFF.

Belongs to the XPG/RAD2 endonuclease family. FEN1 subfamily. As to quaternary structure, interacts with PCNA. Three molecules of FEN1 bind to one PCNA trimer with each molecule binding to one PCNA monomer. PCNA stimulates the nuclease activity without altering cleavage specificity. Requires Mg(2+) as cofactor. In terms of processing, phosphorylated. Phosphorylation upon DNA damage induces relocalization to the nuclear plasma.

Its subcellular location is the nucleus. The protein resides in the nucleolus. It is found in the nucleoplasm. It localises to the mitochondrion. In terms of biological role, structure-specific nuclease with 5'-flap endonuclease and 5'-3' exonuclease activities involved in DNA replication and repair. During DNA replication, cleaves the 5'-overhanging flap structure that is generated by displacement synthesis when DNA polymerase encounters the 5'-end of a downstream Okazaki fragment. It enters the flap from the 5'-end and then tracks to cleave the flap base, leaving a nick for ligation. Also involved in the long patch base excision repair (LP-BER) pathway, by cleaving within the apurinic/apyrimidinic (AP) site-terminated flap. Acts as a genome stabilization factor that prevents flaps from equilibrating into structures that lead to duplications and deletions. Also possesses 5'-3' exonuclease activity on nicked or gapped double-stranded DNA, and exhibits RNase H activity. Also involved in replication and repair of rDNA and in repairing mitochondrial DNA. The sequence is that of Flap endonuclease 1 from Trypanosoma cruzi (strain CL Brener).